Here is a 125-residue protein sequence, read N- to C-terminus: Large ribosomal subunit protein bL17 (125 aa).

Belongs to the bacterial ribosomal protein bL17 family. In terms of assembly, part of the 50S ribosomal subunit. Contacts protein L32.

The sequence is that of Large ribosomal subunit protein bL17 from Blochmanniella pennsylvanica (strain BPEN).